The sequence spans 484 residues: Coronin-1B (484 aa).

At Ser2 the chain carries Phosphoserine. WD repeat units follow at residues 80-120 (GHTG…LTSP), 130-170 (GHTK…ELYR), 174-213 (LHPDLIYNVSWNHNGSLFCSACKDKSVRIIDPRRGTLVAE), 217-260 (AHEG…EPMA), and 265-305 (DSSN…PYIH). Residues 404–446 (LKVSRRNVLSDSRPASYSRSGASTATAVTDVPSGNLAGAGEAG) are disordered. Residues 410-430 (NVLSDSRPASYSRSGASTATA) show a composition bias toward polar residues. Residues 444 to 482 (EAGKLEEVMQELRALRMLVKEQGERISRLEEQLGRMENG) are a coiled coil.

Belongs to the WD repeat coronin family. In terms of assembly, forms homooligomers, but does not form complexes with the other coronins. Interacts with Arp2/3 complex components, including ACTR2, ARPC1B and ARPC2. Binds actin. In terms of processing, phosphorylation on Ser-2 regulates the interaction with the Arp2/3 complex and cell motility in fibroblasts. Phosphorylation does not seem to affect subcellular location. In terms of tissue distribution, ubiquitous.

Its subcellular location is the cytoplasm. It is found in the cytoskeleton. It localises to the stress fiber. Regulates leading edge dynamics and cell motility in fibroblasts. May be involved in cytokinesis and signal transduction. The protein is Coronin-1B (Coro1b) of Mus musculus (Mouse).